Reading from the N-terminus, the 138-residue chain is MGEFQHAIDAKGRLIIPAKLREGLGERFIATKGLDRCLFVFPLAEFEAVSQKLRGLGMSSSAARAFNRLFFSGATECELDPQGRILLPANLREYAGIQKDCVIVGVENRVEIWAAERWAEYSEEAGELYTEIAEKLGF.

SpoVT-AbrB domains lie at 3–45 (EFQH…PLAE) and 74–117 (ATEC…AAER).

It belongs to the MraZ family. Forms oligomers.

Its subcellular location is the cytoplasm. It localises to the nucleoid. The chain is Transcriptional regulator MraZ from Symbiobacterium thermophilum (strain DSM 24528 / JCM 14929 / IAM 14863 / T).